The sequence spans 682 residues: Amphiphysin (682 aa).

Coiled coils occupy residues 10 to 84 (AKNV…LHEV) and 144 to 191 (DYDS…QEEL). The 217-residue stretch at 24–240 (VLQKLGKADE…MTKLGDQHAD (217 aa)) folds into the BAR domain. 4 disordered regions span residues 244–310 (TIQG…PKLT), 446–470 (ILAE…ETTG), 501–530 (GAVR…QEKV), and 561–606 (AAAE…ASDM). Pro residues predominate over residues 261 to 274 (PSPPEEVSPLPSPT). The segment covering 503–527 (VRTEQEAAAEGDKPQGEEKDVDVSQ) has biased composition (basic and acidic residues). The span at 567–596 (TQGTDSETSQIGSEQKATEEIQTTPSQDQP) shows a compositional bias: polar residues. The 74-residue stretch at 609 to 682 (GFLFKVEVLH…FPENFTRHLE (74 aa)) folds into the SH3 domain.

In terms of assembly, heterodimer with BIN1. Binds SH3GLB1. Is abundant in the forebrain and cerebellum. It is also found in the adrenal gland, anterior and posterior pituitary.

Its subcellular location is the cytoplasmic vesicle. The protein localises to the secretory vesicle. The protein resides in the synaptic vesicle membrane. It is found in the cytoplasm. It localises to the cytoskeleton. Functionally, may participate in mechanisms of regulated exocytosis in synapses and certain endocrine cell types. May control the properties of the membrane associated cytoskeleton. The sequence is that of Amphiphysin (AMPH) from Gallus gallus (Chicken).